The chain runs to 662 residues: UvrABC system protein B (662 aa).

In terms of domain architecture, Helicase ATP-binding spans 31–188 (DNIEGGEKAQ…NDLVDIQFER (158 aa)). An ATP-binding site is contributed by 44–51 (GATGTGKT). Residues 97–120 (YYDYYQPEAYVPSSDTYIEKDSSV) carry the Beta-hairpin motif. Positions 435–601 (QIDDLLGEIN…TIKKEIRDLI (167 aa)) constitute a Helicase C-terminal domain. Positions 626–661 (KELVKKLEKQMQEAVEVLDFELAAQIRDMMLEVKAL) constitute a UVR domain.

Belongs to the UvrB family. Forms a heterotetramer with UvrA during the search for lesions. Interacts with UvrC in an incision complex.

The protein localises to the cytoplasm. Its function is as follows. The UvrABC repair system catalyzes the recognition and processing of DNA lesions. A damage recognition complex composed of 2 UvrA and 2 UvrB subunits scans DNA for abnormalities. Upon binding of the UvrA(2)B(2) complex to a putative damaged site, the DNA wraps around one UvrB monomer. DNA wrap is dependent on ATP binding by UvrB and probably causes local melting of the DNA helix, facilitating insertion of UvrB beta-hairpin between the DNA strands. Then UvrB probes one DNA strand for the presence of a lesion. If a lesion is found the UvrA subunits dissociate and the UvrB-DNA preincision complex is formed. This complex is subsequently bound by UvrC and the second UvrB is released. If no lesion is found, the DNA wraps around the other UvrB subunit that will check the other stand for damage. This Streptococcus pneumoniae (strain P1031) protein is UvrABC system protein B.